The primary structure comprises 2269 residues: MVSIINLGKVKPFGLSYIINSNNNNNNNDDDDYNNEIRESESSIPYEYYFCQNPLKSCFNEEQKILLQSENDETDEKGMILVNNSFFEEAQLFWYQNTVVWSSPFTVKKKFTLPLLLSSMIYPKINNAIWSHFPFLKDLSKQQQEQQQQQHHQQSEYTTSSINNDIDDYYKYLCVLHNQGLNIYNSIGNSYQIVLPCKVINIWSSKFGLLLERDSSLDSTLLAGRDRSEIPSIFSILNPLEELKPVLTFSKSNNNNNNNNEALQQEFFSDTNQTIVFSSTDYPILITYSNIENVHIIYQVSHVKPSSNAENDNTNNNNNNNNTNTNISNNQTINNENGTTTTIINNSSIVNTSKPIFNFNNVSVNDQSFDYSNINISSSSPPFSSRNNNNNNNISNNNNTNNNTNNNNTNNSTSMMQQSIQQQQQQQQQQENSSFKFLNEDKSYFFDDESEFIIKSEIIFEEVLKDSTRLKSNTKSKSIFITLDNNQKPLLCIEINSTLFCYNLFIDQKIKSTQSSSSNKNNNNNNDRNEGIEEKLKLEFSFSISSVQSSSPIFIESFYNNNEYTIPKGINQPFIPLPTHILVLNDHLLSVYWGPFKILDLPIDNNSNNNNNNNNNNNNNNNNNNNNNNNNNNNNNNNNKRKPLYIKDSTFNRVTIVYSDKEEIRFKITLGKSYLVSSCLGALSSFIPMNLLASIYQDFNDFHKFRINNLLNSNSNNNNNNNNSEEENDKEWISFQILLISLLEKSLLKRPTDADTNKKIKENNHIKKEENEDDWEFLLNSNYHKNYEKGLSFLSNLNISDSSKVYPSNNNNNNNNNNNNNNNNNNNNNNNNNNNNNNNNNNNNNNNNNNCNIFIESINDFNFKTSLNSFIESIDDIIIALHHQYEEFKILTFNINYIYKLSKFLIQLSLHLELFNYVDYYFRDFGDLIDFINQFKIKSKTSIDISSLKLQSLLNDDIFSIYKFVYNSFNENNSETQQQQQFNKEKFERNKLTKYHFKWIYKMKSLYSIQSKINDNNSNNKNNIKYISEKLIMKMVELDIKLEDLNSISFGLSLPLRESIKYCRSNPPIDWPLKAYSLIEREELIYKFNIDDVNNVKDGLKINSLLISGGKNKLLSNSTMNHGYNSLSTSITNTLSTASSSSNEMNSNSNITSINGQSNGLPMNSTTNQMNSHQINNNGGGGGGGDDHHHHHSNSTSFDLSKFYHGQDEFYKRITYLRFDTDQRIQEVYRLLSFSNRIQINHTQENGVSDHDYLSQLQSKLLLSVQRSISLPIACGMFTIRSIKPLPTETINIPPIILNGFVGGTKTNISLDPTMVQDNMMVWPEFHNGVAAGLKVSADQTEITNTWIIYNRPKQFNPSYSGLLMALGLQKRLSSLAFTKLFEYLASGHQLTSVGLLLGISCTKMGTMDMSIAKVLSVHIQSLHPPLSIDLDVPSYVQIAALMGIGLLYCQTSNRRMTEVLLMEIGRKPINDKPLDRDSYSLTAGMALGLVNLGKGANEGSLTDLHVEDRLRSFIGISKEDSFDHMSTFFNQSYSTPSISSNRNNNDLFNNGSNNNSSSNGGGGGGGGNNNGNNSNNGNNGSSQFKKSNTILESSKPNIDLTAPGAIIALSLIYLKTNNLKISNYLSIPDTTFGLNYIRPDLVLLRILGRNLILWDSIKPQFQWIIDSVPLVVRKNVTIDRNSEKVFQEHSNNNNNNNKSRSSSSLNDFESFILIFCNVIAGAAFSIGLKYAGSLNENAFSLLMDLIQLFRKRQVYLNKCLLKKKKIEPTFDKVMRVTTETCLNVVALSLSLVMAGSGNLETLKILRMLRSRIGNEITYGNHMAINMAIGFLFLGGGQYTLSTSNIAIASLVCSLYPRFPCSSTDNDYHLQAFRHLYFLAIDPRCLITRDVDTLAPCHVPIELTILNNDTMKLETKQLVTPCLIPELSSIRSISIKSPRYWNIFINRGFVDGGVDININNNNNNNNNNNNNNNNNNNNNNNNNNNNNNNNNNNKNILKNHPTIFLKRKIGHLPYTEDPEGFRSLSKSFPKSESISLYSSSKGFQKNKEEFLKSFISDPNLLAFAKHFCTNQSNEFEHFNTTILYECLTQDTPEVIPLLLLLNDIANNFEKYSNSNTTIVLENLRIIFKFYSKWNNGYYLNNNNNKNNNNDGWLIHSTFLDSISTKIDEHFEKHFLNEQSNKKLLSNYLLTGELPNSLSTSIKRKFASFISYYNLPNNKQFQSFKSLLNNNNNNNSNAIYQLWSSLGNQINFNSINKIIELSTLSFDEDS.

5 disordered regions span residues 305 to 334, 379 to 433, 609 to 644, 804 to 845, and 1136 to 1197; these read PSSN…QTIN, SSPP…QENS, NNNN…RKPL, KVYP…NNNN, and STAS…NSTS. Low complexity-rich tracts occupy residues 306-334, 379-430, 609-638, 809-845, and 1136-1159; these read SSNA…QTIN, SSPP…QQQQ, NNNN…NNNN, and STAS…GQSN. Residues 1160 to 1177 show a composition bias toward polar residues; the sequence is GLPMNSTTNQMNSHQINN. PC repeat units lie at residues 1440-1472 and 1483-1520; these read AALM…PIND and TAGM…ISKE. A disordered region spans residues 1535–1586; that stretch reads STPSISSNRNNNDLFNNGSNNNSSSNGGGGGGGGNNNGNNSNNGNNGSSQFK. The span at 1540–1559 shows a compositional bias: low complexity; it reads SSNRNNNDLFNNGSNNNSSS. Positions 1560–1570 are enriched in gly residues; sequence NGGGGGGGGNN. Residues 1571–1583 show a composition bias toward low complexity; that stretch reads NGNNSNNGNNGSS. PC repeat units follow at residues 1605 to 1637, 1722 to 1756, and 1792 to 1807; these read GAII…GLNY, GAAF…RQVY, and LVMA…KILR. Low complexity predominate over residues 1960–1993; that stretch reads NNNNNNNNNNNNNNNNNNNNNNNNNNNNNNNNNN. Residues 1960–1997 are disordered; sequence NNNNNNNNNNNNNNNNNNNNNNNNNNNNNNNNNNKNIL.

Belongs to the APC1 family. As to quaternary structure, the APC/C is composed of at least 13 subunits that stay tightly associated throughout the cell cycle: anapc1, anapc2, anapc3, anapc4, anapc5, anapc6, anapc7, anapc8, anapc10, anapc11, cdc20, cdc26 and cdh1.

It localises to the nucleus. Its pathway is protein modification; protein ubiquitination. Component of the anaphase promoting complex/cyclosome (APC/C), a cell cycle-regulated E3 ubiquitin-protein ligase complex that controls progression through mitosis and the G1 phase of the cell cycle. In Dictyostelium discoideum (Social amoeba), this protein is Anaphase-promoting complex subunit 1 (anapc1).